The sequence spans 146 residues: Prefoldin subunit alpha 1 (146 aa).

The protein belongs to the prefoldin subunit alpha family. As to quaternary structure, heterohexamer of two alpha and four beta subunits.

Its subcellular location is the cytoplasm. Functionally, molecular chaperone capable of stabilizing a range of proteins. Seems to fulfill an ATP-independent, HSP70-like function in archaeal de novo protein folding. The sequence is that of Prefoldin subunit alpha 1 from Thermococcus kodakarensis (strain ATCC BAA-918 / JCM 12380 / KOD1) (Pyrococcus kodakaraensis (strain KOD1)).